Reading from the N-terminus, the 295-residue chain is 3-hydroxy-5-phosphonooxypentane-2,4-dione thiolase (295 aa).

Lys203 acts as the Schiff-base intermediate with substrate in catalysis.

It belongs to the DeoC/FbaB aldolase family. Homodecamer.

The protein localises to the cytoplasm. The catalysed reaction is dihydroxyacetone phosphate + acetyl-CoA = 3-hydroxy-2,4-dioxopentyl phosphate + CoA. Functionally, involved in the degradation of phospho-AI-2, thereby terminating induction of the lsr operon and closing the AI-2 signaling cycle. Catalyzes the transfer of an acetyl moiety from 3-hydroxy-5-phosphonooxypentane-2,4-dione to CoA to form glycerone phosphate and acetyl-CoA. The sequence is that of 3-hydroxy-5-phosphonooxypentane-2,4-dione thiolase from Enterobacter sp. (strain 638).